The primary structure comprises 1490 residues: Leucine-rich repeat-containing protein 7 (1490 aa).

LRR repeat units follow at residues 23 to 44 (IISV…VFNF), 47 to 68 (TLEE…LFNC), 70 to 91 (ALRK…IASL), 93 to 114 (NLKE…IKCC), 116 to 137 (CLTI…FTQL), 139 to 161 (NLTQ…GRLV), 162 to 183 (KLRI…MHKL), 185 to 206 (QLER…LDQI), 208 to 229 (NLRE…IGKL), 231 to 253 (MLVY…SGCE), 254 to 275 (ALED…IGLL), 277 to 298 (KLTT…IGNL), 300 to 321 (LLEE…IGYL), 323 to 344 (SLRT…IGSC), 346 to 367 (NVTV…IGQM), 369 to 391 (RLRV…TKLK), and 392 to 413 (ELAA…QTEA). Residues Ser-439, Ser-441, and Ser-443 each carry the phosphoserine modification. Over residues 663–676 (KKESTDESEVDKTH) the composition is skewed to basic and acidic residues. Disordered regions lie at residues 663-704 (KKES…NTRM), 785-807 (AGEN…AHGR), and 822-899 (ELEQ…YHDP). Residues 677–686 (CLNNSVSSGT) are compositionally biased toward polar residues. A compositionally biased stretch (low complexity) spans 687–700 (YSDYSPSQASSASS). Thr-831 bears the Phosphothreonine mark. Ser-850 carries the phosphoserine modification. A compositionally biased stretch (low complexity) spans 859 to 871 (PSKLETTPTTSPL). The residue at position 865 (Thr-865) is a Phosphothreonine. Phosphoserine is present on Ser-869. Residues 872–882 (PERKDHMKEPT) are compositionally biased toward basic and acidic residues. Ser-947, Ser-949, and Ser-1118 each carry phosphoserine. A compositionally biased stretch (basic and acidic residues) spans 1134 to 1144 (PHELPPGDRYG). Disordered stretches follow at residues 1134–1158 (PHEL…QSSI) and 1196–1218 (QRRP…TRPV). At Arg-1149 the chain carries Omega-N-methylarginine. The segment covering 1196 to 1217 (QRRPLSARSYSTESYGASQTRP) has biased composition (polar residues). Ser-1233 is modified (phosphoserine). 2 disordered regions span residues 1238–1265 (GNYG…SCGK) and 1282–1312 (RLDR…PYPL). Residues 1243–1263 (KTSDNSDIKTRPTPVKGEESC) are compositionally biased toward basic and acidic residues. Over residues 1286-1307 (TPSQQSNILDNGQEDVSPSGQW) the composition is skewed to polar residues. Residues Ser-1288 and Ser-1392 each carry the phosphoserine modification. The region spanning 1398-1488 (EQFCVRIEKN…TVDLVIQREL (91 aa)) is the PDZ domain.

It belongs to the LAP (LRR and PDZ) protein family. In terms of assembly, interacts with CNKSR2 and DLG4. Interacts with CTNND2/Catenin delta-2. Forms a complex with N-cadherin through CTNND2. Interacts with CAMK2A. In terms of tissue distribution, expressed in brain (at protein level).

The protein resides in the cytoplasm. The protein localises to the postsynaptic density. Functionally, required for normal synaptic spine architecture and function. Necessary for DISC1 and GRM5 localization to postsynaptic density complexes and for both N-methyl D-aspartate receptor-dependent and metabotropic glutamate receptor-dependent long term depression. This is Leucine-rich repeat-containing protein 7 (Lrrc7) from Mus musculus (Mouse).